Here is a 469-residue protein sequence, read N- to C-terminus: Citrate synthase, mitochondrial (469 aa).

The transit peptide at 1-30 (MSFLSVSRLAPKLLNSKNATYFLVAARNAS) directs the protein to the mitochondrion. Active-site residues include histidine 304 and histidine 350. Arginine 359 contributes to the oxaloacetate binding site. Aspartate 405 is a catalytic residue. Oxaloacetate contacts are provided by arginine 431 and arginine 451.

This sequence belongs to the citrate synthase family. In terms of assembly, homodimer.

It localises to the mitochondrion matrix. The catalysed reaction is oxaloacetate + acetyl-CoA + H2O = citrate + CoA + H(+). It participates in carbohydrate metabolism; tricarboxylic acid cycle; isocitrate from oxaloacetate: step 1/2. Key enzyme of the Krebs tricarboxylic acid cycle which catalyzes the synthesis of citrate from acetyl coenzyme A and oxaloacetate. The polypeptide is Citrate synthase, mitochondrial (cs) (Thunnus albacares (Yellowfin tuna)).